The primary structure comprises 176 residues: Nucleoside triphosphate/diphosphate phosphatase (176 aa).

The Proton donor role is filled by Arg23. The Mg(2+) site is built by Asn87, Asp103, Asp105, Asp107, Asp120, and Glu123.

This sequence belongs to the Ntdp family. Mg(2+) serves as cofactor.

The catalysed reaction is a ribonucleoside 5'-triphosphate + H2O = a ribonucleoside 5'-diphosphate + phosphate + H(+). The enzyme catalyses a ribonucleoside 5'-diphosphate + H2O = a ribonucleoside 5'-phosphate + phosphate + H(+). Functionally, has nucleoside phosphatase activity towards nucleoside triphosphates and nucleoside diphosphates. The polypeptide is Nucleoside triphosphate/diphosphate phosphatase (yjjG) (Lactococcus lactis subsp. lactis (strain IL1403) (Streptococcus lactis)).